The primary structure comprises 295 residues: Septu protein PtuB (295 aa).

Functionally, component of antiviral defense system Septu type II, composed of PtuA and PtuB. Expression of Septu type II in B.subtilis (strain BEST7003) confers resistance to phages SBSphiC and SpBeta. May be a nuclease. This Bacillus mycoides (strain KBAB4) (Bacillus weihenstephanensis) protein is Septu protein PtuB.